Reading from the N-terminus, the 398-residue chain is Ureide permease 2 (398 aa).

Topologically, residues 1 to 10 are extracellular; sequence MYLVESKGGA. Residues 11–31 traverse the membrane as a helical segment; sequence IACMLLALLSLGTWPAVLTLL. At 32 to 44 the chain is on the cytoplasmic side; sequence ERRGRLPQHTYLD. A helical transmembrane segment spans residues 45 to 65; it reads YSITNLLAAIIIAFTFGQIGS. The Extracellular segment spans residues 66–81; that stretch reads TKPDSPNFITQLAQDN. Residues 82–102 form a helical membrane-spanning segment; it reads WPSVMFAMAGGIVLSLGNLST. The Cytoplasmic segment spans residues 103–104; that stretch reads QY. A helical transmembrane segment spans residues 105–125; it reads AWALVGLSVTEVITSSITVVI. Residues 126 to 139 lie on the Extracellular side of the membrane; that stretch reads GSTLNYFLDDKINK. The chain crosses the membrane as a helical span at residues 140–160; it reads AEILFPGVACFLIAVCLGSAV. Topologically, residues 161 to 229 are cytoplasmic; the sequence is HRSNADDNKA…RAIKVFGKRK (69 aa). The tract at residues 176 to 200 is disordered; that stretch reads ETAKQEASGPSTEIGTNSSKDLETN. A compositionally biased stretch (polar residues) spans 183 to 200; it reads SGPSTEIGTNSSKDLETN. An ATP-binding site is contributed by 221–228; the sequence is AIKVFGKR. A helical membrane pass occupies residues 230–250; sequence IIGLAITFFAGLCFSLFSPAF. Residues 251 to 272 lie on the Extracellular side of the membrane; sequence NLATNDQWNRLKQGVPKLVVYT. Residues 273–293 form a helical membrane-spanning segment; the sequence is AFFYFSVSCFIIALILNVVFL. The Cytoplasmic portion of the chain corresponds to 294–315; the sequence is YYPVLGLPKSSFKAYLNDWNGR. Residues 316-336 traverse the membrane as a helical segment; that stretch reads YWAFLAGFLCGFGNGLQFMGG. Residues 337–341 lie on the Extracellular side of the membrane; it reads QAAGY. Residues 342–362 traverse the membrane as a helical segment; sequence AAADSVQALPLVSTFWGVVLF. The Cytoplasmic portion of the chain corresponds to 363 to 371; that stretch reads GEYRRSSRK. Residues 372–392 traverse the membrane as a helical segment; the sequence is TYLLLFCMLFMFISAVAVLMA. Topologically, residues 393 to 398 are extracellular; that stretch reads SSGHRK.

Belongs to the plant ureide permease (TC 2.A.7.19) family. In terms of tissue distribution, expressed in root xylem, cotyledons and leaves. Expressed in leaf blades, petioles, trichomes, stems, flower stigma, the upper part of pedicels, sepals, and the top and bottom parts of carpels in siliques.

It localises to the membrane. In terms of biological role, proton-coupled transporter that transports a wide spectrum of oxo derivatives of heterocyclic nitrogen compounds, including allantoin, uric acid and xanthine, but not adenine. Mediates high affinity transport of uracil and 5-fluorouracil (a toxic uracil analog). Mediates transport of free pyrimidines and may function during early seedling development in salvage pathways, by the utilization of pyrimidines from seed storage tissue. This chain is Ureide permease 2, found in Arabidopsis thaliana (Mouse-ear cress).